We begin with the raw amino-acid sequence, 295 residues long: Host-inducible protein A (295 aa).

The interval 1 to 20 (MHLDRSDSNGGSSRYTLDHE) is disordered.

The protein belongs to the NopP family.

The polypeptide is Host-inducible protein A (Rhizobium fredii (Sinorhizobium fredii)).